A 64-amino-acid polypeptide reads, in one-letter code: DNA gyrase inhibitor YacG (64 aa).

The Zn(2+) site is built by Cys-6, Cys-9, Cys-25, and Cys-29.

This sequence belongs to the DNA gyrase inhibitor YacG family. In terms of assembly, interacts with GyrB. It depends on Zn(2+) as a cofactor.

In terms of biological role, inhibits all the catalytic activities of DNA gyrase by preventing its interaction with DNA. Acts by binding directly to the C-terminal domain of GyrB, which probably disrupts DNA binding by the gyrase. This is DNA gyrase inhibitor YacG from Haemophilus influenzae (strain ATCC 51907 / DSM 11121 / KW20 / Rd).